A 90-amino-acid polypeptide reads, in one-letter code: Large ribosomal subunit protein eL31 (90 aa).

Belongs to the eukaryotic ribosomal protein eL31 family.

The chain is Large ribosomal subunit protein eL31 from Natronomonas pharaonis (strain ATCC 35678 / DSM 2160 / CIP 103997 / JCM 8858 / NBRC 14720 / NCIMB 2260 / Gabara) (Halobacterium pharaonis).